The chain runs to 445 residues: RNA-binding protein asd-2 (445 aa).

The segment at 22–63 (TVIPPPPNDSGHEFIGPSSGPPQVTITPSGVQSGSANGVSTS) is disordered. Over residues 42–63 (PPQVTITPSGVQSGSANGVSTS) the composition is skewed to polar residues. The segment at 71 to 128 (EYLSQLLKDKKQLAAFPNVFHHLERLADEEINKVRVVLFQCEFSKESAPLPDAEGDST) is qua1 domain. The region spanning 145–171 (NFVGRILGPRGMTAKQLEQETGCKIMV) is the KH domain. Residues 230-253 (APEGEDDLKRKQLMELAIINGTYR) are qua2 domain; involved in RNA binding.

Interacts with sup-12; in the presence of RNA, but with weak affinity in the absence of RNA. Isoform b: Expressed in the hypodermis and pharyngeal muscles. Isoform c: Expressed in body wall muscles and phayngeal muscles.

Its subcellular location is the nucleus. In terms of biological role, RNA-binding protein that binds to the 5'-NACUAAY-N(1,20)-UAAY-3' consensus sequence in pre-mRNA introns to promote alternative splicing. Required for mutually exclusive alternative splicing where it modulates the switch between mutually exclusive exons during pre-mRNA maturation. Involved in muscle-specific gene expression regulating the alternative splicing of genes such as let-2 and unc-60 to ensure that their respective isoforms are expressed in muscle. Promotes the removal of intron 10 from let-2 pre-mRNA to allow for the exclusive expression of the muscle-specific let-2 isoform (as opposed to the non-muscle-specific isoform expressed in embryos) in body wall muscles during late larval and adult stages of development. Binds cooperatively with RNA-binding protein sup-12 to intron 1A of the unc-60 pre-mRNA to promote alternative splicing and expression of the muscle specific isoform of unc-60. The polypeptide is RNA-binding protein asd-2 (Caenorhabditis elegans).